The sequence spans 508 residues: Maturase K (508 aa).

This sequence belongs to the intron maturase 2 family. MatK subfamily.

The protein resides in the plastid. It is found in the chloroplast. In terms of biological role, usually encoded in the trnK tRNA gene intron. Probably assists in splicing its own and other chloroplast group II introns. In Amburana cearensis (Cerejeira), this protein is Maturase K.